The following is a 319-amino-acid chain: Tryptophan--tRNA ligase (319 aa).

ATP contacts are provided by residues 8 to 10 and 16 to 17; these read QPS and GN. A 'HIGH' region motif is present at residues 9-17; sequence PSGDLHIGN. Aspartate 131 provides a ligand contact to L-tryptophan. ATP-binding positions include 143–145, valine 182, and 189–193; these read GKD and KMSKS. Residues 189–193 carry the 'KMSKS' region motif; the sequence is KMSKS.

This sequence belongs to the class-I aminoacyl-tRNA synthetase family. In terms of assembly, homodimer.

It is found in the cytoplasm. It catalyses the reaction tRNA(Trp) + L-tryptophan + ATP = L-tryptophyl-tRNA(Trp) + AMP + diphosphate + H(+). Its function is as follows. Catalyzes the attachment of tryptophan to tRNA(Trp). This chain is Tryptophan--tRNA ligase, found in Campylobacter jejuni subsp. jejuni serotype O:2 (strain ATCC 700819 / NCTC 11168).